Consider the following 258-residue polypeptide: Thrombin-like enzyme saxthrombin (258 aa).

Positions 1–18 are cleaved as a signal peptide; sequence MVLIRVLANLLILQLSYA. Residues 19–24 constitute a propeptide that is removed on maturation; that stretch reads QKSSEL. Residues 25–249 form the Peptidase S1 domain; that stretch reads VIGGDECNIN…YNHWIQSIIA (225 aa). 6 cysteine pairs are disulfide-bonded: cysteine 31–cysteine 163, cysteine 50–cysteine 66, cysteine 98–cysteine 256, cysteine 142–cysteine 210, cysteine 174–cysteine 189, and cysteine 200–cysteine 225. Asparagine 44 is a glycosylation site (N-linked (GlcNAc...) asparagine). Catalysis depends on charge relay system residues histidine 65 and aspartate 110. The active-site Charge relay system is serine 204. N-linked (GlcNAc...) asparagine glycosylation is present at asparagine 251.

It belongs to the peptidase S1 family. Snake venom subfamily. Monomer. In terms of tissue distribution, expressed by the venom gland.

It localises to the secreted. Its function is as follows. Thrombin-like snake venom serine protease that shows strong blood coagulation activity in vitro. The polypeptide is Thrombin-like enzyme saxthrombin (Gloydius intermedius (Central Asian pit viper)).